The following is a 261-amino-acid chain: Sugar fermentation stimulation protein homolog (261 aa).

A disordered region spans residues 1-23; sequence MTDSAKPQNPDPGHESRRVAPLA.

The protein belongs to the SfsA family.

This chain is Sugar fermentation stimulation protein homolog, found in Syntrophobacter fumaroxidans (strain DSM 10017 / MPOB).